We begin with the raw amino-acid sequence, 557 residues long: Arginine--tRNA ligase (557 aa).

Residues 128 to 138 (ANPTGPLHVGH) carry the 'HIGH' region motif.

This sequence belongs to the class-I aminoacyl-tRNA synthetase family. As to quaternary structure, monomer.

The protein resides in the cytoplasm. The catalysed reaction is tRNA(Arg) + L-arginine + ATP = L-arginyl-tRNA(Arg) + AMP + diphosphate. The protein is Arginine--tRNA ligase of Thiobacillus denitrificans (strain ATCC 25259 / T1).